The chain runs to 296 residues: Formamidopyrimidine-DNA glycosylase (296 aa).

The active-site Schiff-base intermediate with DNA is the P2. E3 (proton donor) is an active-site residue. K58 acts as the Proton donor; for beta-elimination activity in catalysis. Positions 106, 125, and 167 each coordinate DNA. The segment at 258–294 (RVYDRVGLPCSRPGCAGAITRIVQANRSTFFCATCQP) adopts an FPG-type zinc-finger fold. Residue R284 is the Proton donor; for delta-elimination activity of the active site.

The protein belongs to the FPG family. In terms of assembly, monomer. It depends on Zn(2+) as a cofactor.

It carries out the reaction Hydrolysis of DNA containing ring-opened 7-methylguanine residues, releasing 2,6-diamino-4-hydroxy-5-(N-methyl)formamidopyrimidine.. The enzyme catalyses 2'-deoxyribonucleotide-(2'-deoxyribose 5'-phosphate)-2'-deoxyribonucleotide-DNA = a 3'-end 2'-deoxyribonucleotide-(2,3-dehydro-2,3-deoxyribose 5'-phosphate)-DNA + a 5'-end 5'-phospho-2'-deoxyribonucleoside-DNA + H(+). Involved in base excision repair of DNA damaged by oxidation or by mutagenic agents. Acts as a DNA glycosylase that recognizes and removes damaged bases. Has a preference for oxidized purines, such as 7,8-dihydro-8-oxoguanine (8-oxoG). Has AP (apurinic/apyrimidinic) lyase activity and introduces nicks in the DNA strand. Cleaves the DNA backbone by beta-delta elimination to generate a single-strand break at the site of the removed base with both 3'- and 5'-phosphates. The chain is Formamidopyrimidine-DNA glycosylase from Methylobacterium radiotolerans (strain ATCC 27329 / DSM 1819 / JCM 2831 / NBRC 15690 / NCIMB 10815 / 0-1).